The sequence spans 556 residues: Formate--tetrahydrofolate ligase 1 (556 aa).

65–72 (TPAGEGKT) provides a ligand contact to ATP.

Belongs to the formate--tetrahydrofolate ligase family.

It catalyses the reaction (6S)-5,6,7,8-tetrahydrofolate + formate + ATP = (6R)-10-formyltetrahydrofolate + ADP + phosphate. Its pathway is one-carbon metabolism; tetrahydrofolate interconversion. This chain is Formate--tetrahydrofolate ligase 1, found in Desulfitobacterium hafniense (strain Y51).